A 346-amino-acid chain; its full sequence is [LysW]-lysine/[LysW]-ornithine hydrolase (346 aa).

Zn(2+) is bound at residue His68. Asp70 is an active-site residue. Asp92 contacts Zn(2+). Catalysis depends on Glu122, which acts as the Proton acceptor. Glu123, Glu146, and His317 together coordinate Zn(2+).

The protein belongs to the peptidase M20A family. LysK subfamily. Zn(2+) serves as cofactor. It depends on Co(2+) as a cofactor.

It localises to the cytoplasm. It catalyses the reaction [amino-group carrier protein]-C-terminal-gamma-(L-lysyl)-L-glutamate + H2O = [amino-group carrier protein]-C-terminal-L-glutamate + L-lysine. It carries out the reaction [amino-group carrier protein]-C-terminal-gamma-(L-ornithyl)-L-glutamate + H2O = [amino-group carrier protein]-C-terminal-L-glutamate + L-ornithine. Its pathway is amino-acid biosynthesis; L-lysine biosynthesis via AAA pathway; L-lysine from L-alpha-aminoadipate (Thermus route): step 5/5. It participates in amino-acid biosynthesis; L-arginine biosynthesis. Catalyzes the release of L-lysine from [LysW]-gamma-L-lysine and the release of L-ornithine from [LysW]-L-ornithine. In Saccharolobus islandicus (strain Y.G.57.14 / Yellowstone #1) (Sulfolobus islandicus), this protein is [LysW]-lysine/[LysW]-ornithine hydrolase.